Here is a 331-residue protein sequence, read N- to C-terminus: GTP 3',8-cyclase (331 aa).

One can recognise a Radical SAM core domain in the interval 9–233; the sequence is SFGRQVTYVR…TATNEHTGGP (225 aa). A GTP-binding site is contributed by R18. Positions 25 and 29 each coordinate [4Fe-4S] cluster. An S-adenosyl-L-methionine-binding site is contributed by Y31. C32 contributes to the [4Fe-4S] cluster binding site. Residue R67 participates in GTP binding. G71 is a binding site for S-adenosyl-L-methionine. T98 is a binding site for GTP. S122 contributes to the S-adenosyl-L-methionine binding site. K159 serves as a coordination point for GTP. M193 provides a ligand contact to S-adenosyl-L-methionine. Residues C257 and C260 each contribute to the [4Fe-4S] cluster site. 262-264 is a GTP binding site; sequence RVR. Residue C274 coordinates [4Fe-4S] cluster.

It belongs to the radical SAM superfamily. MoaA family. As to quaternary structure, monomer and homodimer. Requires [4Fe-4S] cluster as cofactor.

It carries out the reaction GTP + AH2 + S-adenosyl-L-methionine = (8S)-3',8-cyclo-7,8-dihydroguanosine 5'-triphosphate + 5'-deoxyadenosine + L-methionine + A + H(+). Its pathway is cofactor biosynthesis; molybdopterin biosynthesis. Functionally, catalyzes the cyclization of GTP to (8S)-3',8-cyclo-7,8-dihydroguanosine 5'-triphosphate. The chain is GTP 3',8-cyclase from Saccharophagus degradans (strain 2-40 / ATCC 43961 / DSM 17024).